The following is a 268-amino-acid chain: Glucosamine-6-phosphate deaminase (268 aa).

Asp-67 acts as the Proton acceptor; for enolization step in catalysis. Catalysis depends on Asn-136, which acts as the For ring-opening step. His-138 functions as the Proton acceptor; for ring-opening step in the catalytic mechanism. The active-site For ring-opening step is Glu-143.

It belongs to the glucosamine/galactosamine-6-phosphate isomerase family. NagB subfamily. Homohexamer.

The enzyme catalyses alpha-D-glucosamine 6-phosphate + H2O = beta-D-fructose 6-phosphate + NH4(+). It participates in amino-sugar metabolism; N-acetylneuraminate degradation; D-fructose 6-phosphate from N-acetylneuraminate: step 5/5. Functionally, catalyzes the reversible isomerization-deamination of glucosamine 6-phosphate (GlcN6P) to form fructose 6-phosphate (Fru6P) and ammonium ion. The protein is Glucosamine-6-phosphate deaminase of Shewanella loihica (strain ATCC BAA-1088 / PV-4).